We begin with the raw amino-acid sequence, 274 residues long: tRNA (guanine-N(1)-)-methyltransferase (274 aa).

S-adenosyl-L-methionine-binding positions include Gly-116 and 140-145 (LGDYVL).

Belongs to the RNA methyltransferase TrmD family. As to quaternary structure, homodimer.

The protein localises to the cytoplasm. The catalysed reaction is guanosine(37) in tRNA + S-adenosyl-L-methionine = N(1)-methylguanosine(37) in tRNA + S-adenosyl-L-homocysteine + H(+). Functionally, specifically methylates guanosine-37 in various tRNAs. The protein is tRNA (guanine-N(1)-)-methyltransferase of Arthrobacter sp. (strain FB24).